The primary structure comprises 233 residues: Putative T-box protein 41 (233 aa).

Residues 1 to 146 (MTVTRNGCRI…MNPHARHFLK (146 aa)) constitute a DNA-binding region (T-box).

Its subcellular location is the nucleus. This is Putative T-box protein 41 (tbx-41) from Caenorhabditis elegans.